We begin with the raw amino-acid sequence, 285 residues long: 33 kDa chaperonin (285 aa).

Intrachain disulfides connect Cys228–Cys230 and Cys261–Cys264.

It belongs to the HSP33 family. Under oxidizing conditions two disulfide bonds are formed involving the reactive cysteines. Under reducing conditions zinc is bound to the reactive cysteines and the protein is inactive.

It localises to the cytoplasm. In terms of biological role, redox regulated molecular chaperone. Protects both thermally unfolding and oxidatively damaged proteins from irreversible aggregation. Plays an important role in the bacterial defense system toward oxidative stress. In Hahella chejuensis (strain KCTC 2396), this protein is 33 kDa chaperonin.